The primary structure comprises 159 residues: MAETFSSLQDLKSATAAPTQEAPHYVQKLDAQGRAYATGKRKDAVARVWIKPGSGKVVVNGRAVEVYFARPVLRMILQQPLGVAKRVDQYDLTVTVAGGGLSGQAGAVRHGLSKALVAFEPELRGVLKKEGFLTRDSRVVERKKYGKKKARRSFQFSKR.

This sequence belongs to the universal ribosomal protein uS9 family.

In Methylocella silvestris (strain DSM 15510 / CIP 108128 / LMG 27833 / NCIMB 13906 / BL2), this protein is Small ribosomal subunit protein uS9.